The primary structure comprises 1142 residues: MVDLESEVPPLPPRYRFRDLLLGDQGWQNDDRVQVEFYMNENTFKERLKLFFIKNQRSSLRIRLFNFSLKLLSCLLYIIRVLLEKPSQGNDWSHIFWVNRSLPLWGLQVSVALISLFETILLGYLSYKGNIWEQILRVPFILEIINAVPFIISIFWPTLRNLFVPVFLNCWLAKHALENMINDLHRAIQRTQSAMFNQVLILISTLLCLIFTCICGIQHLERIGKKLNLFDSLYFCIVTFSTVGFGDVTPETWSSKLFVVAMICVALVVLPIQFEQLAYLWMERQKSGGNYSRHRAQTEKHVVLCVSSLKIDLLMDFLNEFYAHPRLQDYYVVILCPTEMDVQVRRVLQIPMWSQRVIYLQGSALKDQDLLRAKMDNAEACFILSSRCEVDRTSSDHQTILRAWAVKDFAPNCPLYVQILKPENKFHIKFADHVVCEEEFKYAMLALNCICPATSTLITLLVHTSRGQCVCLCCREGQQSPEQWQKTYGRCSGNEVYHIVLEESTFFAEYEGKSFTYASFHAHKKFGVCLVGVRREDNKNILLNPGPRYIMNASDICFYINITKEENSAFKNQDQQRKSNVSRSFYHGPSRLPVHSIIASMGTVAIDLQDTSCRAASGPTLALPSEGGKELRRPSIAPVLEVADTSSIQTCDLLSDQSEDETTPDEETSSNLEYAKGYPPYSPYIGSSPTFCHLLQEKVPFCCLRLDKSCQHNYYEDAKAYGFKNKLIIVAAETAGNGLYNFIVPLRAYYRPKKELNPIVLLLDNPPDMHFLDAICWFPMVYYMVGSIDNLDDLLRCGVTFAANMVVVDKESTMSAEEDYMADAKTIVNVQTLFRLFSSLSIITELTHPANMRFMQFRAKDCYSLALSKLEKKERERGSNLAFMFRLPFAAGRVFSISMLDTLLYQSFVKDYMISITRLLLGLDTIPGSGFLCSMKITEDDLWIRTYARLYQKLCSSTGDVPIGIYRTESQKLTTSESQISISVEEWEDTKDVKDPGHHRSIHRNSTSSDQSDHPLLRRKSMQWARRLSRKGPKHSGKTAEKITQQRLNLYRRSERQELAELVKNRMKHLGLSTVGYDEMNDHQSTLSYILINPSPDTRLELNDVVYLIRPDPLSYLPNSEPSRKNSICNAAVQDSREETQL.

The Cytoplasmic portion of the chain corresponds to 1 to 63; that stretch reads MVDLESEVPP…KNQRSSLRIR (63 aa). A helical membrane pass occupies residues 64–84; the sequence is LFNFSLKLLSCLLYIIRVLLE. Topologically, residues 85–101 are extracellular; that stretch reads KPSQGNDWSHIFWVNRS. An N-linked (GlcNAc...) asparagine glycan is attached at N99. The chain crosses the membrane as a helical span at residues 102-122; the sequence is LPLWGLQVSVALISLFETILL. Residues 123-137 are Cytoplasmic-facing; it reads GYLSYKGNIWEQILR. The helical transmembrane segment at 138 to 158 threads the bilayer; it reads VPFILEIINAVPFIISIFWPT. At 159–160 the chain is on the extracellular side; the sequence is LR. Residues 161-173 form a helical membrane-spanning segment; that stretch reads NLFVPVFLNCWLA. Residues 174-198 are Cytoplasmic-facing; that stretch reads KHALENMINDLHRAIQRTQSAMFNQ. A helical transmembrane segment spans residues 199–219; that stretch reads VLILISTLLCLIFTCICGIQH. Residues 220 to 228 are Extracellular-facing; it reads LERIGKKLN. The pore-forming intramembrane region spans 229–249; the sequence is LFDSLYFCIVTFSTVGFGDVT. The Extracellular segment spans residues 250–256; that stretch reads PETWSSK. The helical transmembrane segment at 257-277 threads the bilayer; the sequence is LFVVAMICVALVVLPIQFEQL. Residues 278–1142 are Cytoplasmic-facing; that stretch reads AYLWMERQKS…VQDSREETQL (865 aa). RCK N-terminal domains follow at residues 299-435 and 725-865; these read EKHV…DHVV and NKLI…CYSL. Disordered regions lie at residues 989-1044 and 1118-1142; these read DTKD…EKIT and PNSEPSRKNSICNAAVQDSREETQL. Positions 1017 to 1037 are enriched in basic residues; it reads LRRKSMQWARRLSRKGPKHSG. Positions 1118–1129 are enriched in polar residues; it reads PNSEPSRKNSIC.

Belongs to the potassium channel family. Calcium-activated (TC 1.A.1.3) subfamily. KCa4.2/KCNT2 sub-subfamily. In terms of assembly, homotetramer. Forms heteromer with KCNT1; heteromeric channels differ from those of homomeric channels in their unitary conductance, kinetic behavior, subcellular localization, and response to activation of protein kinase C. Phosphorylated by protein kinase C. Phosphorylation of the C-terminal domain inhibits channel activity. Detected in brain, and at low levels in heart. Detected in brainstem, including auditory neurons such as the medial nucleus of the trapezoid body. Detected in the olfactory bulb, red nucleus, facial nucleus, pontine nucleus, oculomotor nucleus, substantia nigra, deep cerebellar nuclei, vestibular nucleus, and the thalamus. Detected in hippocampal CA1, CA2, and CA3 regions, the dentate gyrus, supraoptic nucleus, hypothalamus, dorsal root ganglion, and cortical layers II, III, and V. Detected in striatum cholinergic interneurons.

The protein resides in the cell membrane. The catalysed reaction is K(+)(in) = K(+)(out). With respect to regulation, are normally in a closed state unless activated by an increase in intracellular Na(+) and Cl(-). Inhibited upon stimulation of G-protein coupled receptors, such as CHRM1 and GRM1. There is conflicting data about the effect of ATP on KNCT2 channels activity. Intracellular ATP was initially report to inhibit the channel activity. However, others studies conclude that KNCT2 channels are not inhibited by intracellular ATP. Its function is as follows. Sodium-activated and chloride-activated potassium channel. Produces rapidly activating outward rectifier K(+) currents. Contributes to regulate neuronal excitability. The sequence is that of Potassium channel subfamily T member 2 (Kcnt2) from Rattus norvegicus (Rat).